The chain runs to 565 residues: Polycomb protein EED (565 aa).

WD repeat units follow at residues 89–133 (DDGN…LYRT), 136–176 (GHGG…EKQP), 185–224 (GHSY…NEHM), and 240–278 (IHNN…SDDP). Residues 417–488 (VKKAPGAAGS…SASPDPDSPF (72 aa)) form a disordered region. Residues 429–450 (GTAANGGHNNNNNNNNNNNNNN) show a composition bias toward low complexity. The segment covering 451-468 (HETGSQRSFSATNNLSNS) has biased composition (polar residues). The WD 5 repeat unit spans residues 519 to 559 (IDGAFVGRQVGWSPEGEWCVVVGNGNRALIYQRWGKERGLG).

It belongs to the WD repeat ESC family. As to quaternary structure, component of the polycomb repressive complex 2 (PRC2) that consists of four core subunits icluding EZH2, EED, SUZ12, and RBBP4, among which EZH2 is the catalytic subunit and which minimally requires EED and SUZ12 for catalysis.

Its subcellular location is the nucleus. In terms of biological role, component of the of the Polycomb Repressive Complex 2 (PRC2), a histone H3 lysine methyltransferase responsible for generating mono-, di-, and tri-methylation on Lys27 (H3K27me1, H3K27me2 and H3K27me3). The tri-methylated form is known to be critical in gene repression, and its proper placement is essential in defining repression patterns during development. EED is not a catalytic subunit but is required for the complex regulation of histone H3 lysine methylation by EZH2. In Chaetomium thermophilum (strain DSM 1495 / CBS 144.50 / IMI 039719) (Thermochaetoides thermophila), this protein is Polycomb protein EED.